A 461-amino-acid chain; its full sequence is Cysteine--tRNA ligase (461 aa).

A Zn(2+)-binding site is contributed by Cys-28. A 'HIGH' region motif is present at residues 30–40 (ITVYDLCHIGH). 3 residues coordinate Zn(2+): Cys-209, His-234, and Glu-238. The 'KMSKS' region motif lies at 266–270 (KMSKS). Lys-269 is an ATP binding site.

The protein belongs to the class-I aminoacyl-tRNA synthetase family. Monomer. It depends on Zn(2+) as a cofactor.

The protein localises to the cytoplasm. The enzyme catalyses tRNA(Cys) + L-cysteine + ATP = L-cysteinyl-tRNA(Cys) + AMP + diphosphate. The polypeptide is Cysteine--tRNA ligase (Klebsiella pneumoniae (strain 342)).